The chain runs to 117 residues: Prefoldin subunit beta (117 aa).

This sequence belongs to the prefoldin subunit beta family. Heterohexamer of two alpha and four beta subunits.

Its subcellular location is the cytoplasm. In terms of biological role, molecular chaperone capable of stabilizing a range of proteins. Seems to fulfill an ATP-independent, HSP70-like function in archaeal de novo protein folding. The polypeptide is Prefoldin subunit beta (Thermococcus kodakarensis (strain ATCC BAA-918 / JCM 12380 / KOD1) (Pyrococcus kodakaraensis (strain KOD1))).